A 279-amino-acid chain; its full sequence is Phosphatidylglycerol--prolipoprotein diacylglyceryl transferase (279 aa).

Transmembrane regions (helical) follow at residues 18-38 (LSVR…YFVA), 55-75 (IIFY…VIFQ), and 89-109 (IWHG…AGVI). Arg-137 contacts a 1,2-diacyl-sn-glycero-3-phospho-(1'-sn-glycerol). Transmembrane regions (helical) follow at residues 203-223 (LGET…FIEG) and 235-255 (IRVA…LIVY).

This sequence belongs to the Lgt family.

It is found in the cell membrane. It carries out the reaction L-cysteinyl-[prolipoprotein] + a 1,2-diacyl-sn-glycero-3-phospho-(1'-sn-glycerol) = an S-1,2-diacyl-sn-glyceryl-L-cysteinyl-[prolipoprotein] + sn-glycerol 1-phosphate + H(+). It participates in protein modification; lipoprotein biosynthesis (diacylglyceryl transfer). Catalyzes the transfer of the diacylglyceryl group from phosphatidylglycerol to the sulfhydryl group of the N-terminal cysteine of a prolipoprotein, the first step in the formation of mature lipoproteins. This Staphylococcus aureus (strain bovine RF122 / ET3-1) protein is Phosphatidylglycerol--prolipoprotein diacylglyceryl transferase.